Here is a 134-residue protein sequence, read N- to C-terminus: ATP synthase epsilon chain (134 aa).

Belongs to the ATPase epsilon chain family. F-type ATPases have 2 components, CF(1) - the catalytic core - and CF(0) - the membrane proton channel. CF(1) has five subunits: alpha(3), beta(3), gamma(1), delta(1), epsilon(1). CF(0) has three main subunits: a, b and c.

Its subcellular location is the cell membrane. In terms of biological role, produces ATP from ADP in the presence of a proton gradient across the membrane. This Clostridium botulinum (strain Eklund 17B / Type B) protein is ATP synthase epsilon chain.